The sequence spans 119 residues: Protein TusC (119 aa).

This sequence belongs to the DsrF/TusC family. In terms of assembly, heterohexamer, formed by a dimer of trimers. The hexameric TusBCD complex contains 2 copies each of TusB, TusC and TusD. The TusBCD complex interacts with TusE.

It is found in the cytoplasm. Part of a sulfur-relay system required for 2-thiolation of 5-methylaminomethyl-2-thiouridine (mnm(5)s(2)U) at tRNA wobble positions. The chain is Protein TusC from Escherichia coli O157:H7.